A 421-amino-acid polypeptide reads, in one-letter code: Serine--tRNA ligase (421 aa).

230–232 is a binding site for L-serine; that stretch reads TAE. An ATP-binding site is contributed by 259–261; sequence RRE. Residue Glu-282 participates in L-serine binding. 346–349 is a binding site for ATP; sequence EISS. An L-serine-binding site is contributed by Ser-381.

Belongs to the class-II aminoacyl-tRNA synthetase family. Type-1 seryl-tRNA synthetase subfamily. Homodimer. The tRNA molecule binds across the dimer.

The protein resides in the cytoplasm. The catalysed reaction is tRNA(Ser) + L-serine + ATP = L-seryl-tRNA(Ser) + AMP + diphosphate + H(+). The enzyme catalyses tRNA(Sec) + L-serine + ATP = L-seryl-tRNA(Sec) + AMP + diphosphate + H(+). The protein operates within aminoacyl-tRNA biosynthesis; selenocysteinyl-tRNA(Sec) biosynthesis; L-seryl-tRNA(Sec) from L-serine and tRNA(Sec): step 1/1. Its function is as follows. Catalyzes the attachment of serine to tRNA(Ser). Is also able to aminoacylate tRNA(Sec) with serine, to form the misacylated tRNA L-seryl-tRNA(Sec), which will be further converted into selenocysteinyl-tRNA(Sec). The chain is Serine--tRNA ligase from Acidithiobacillus ferrooxidans (strain ATCC 23270 / DSM 14882 / CIP 104768 / NCIMB 8455) (Ferrobacillus ferrooxidans (strain ATCC 23270)).